Here is a 750-residue protein sequence, read N- to C-terminus: Cellulose synthase-like protein H1 (750 aa).

A run of 2 helical transmembrane segments spans residues 27-47 (LAILFLLLALLLHRVLHDSGA) and 52-72 (AALACEAWFTFMWLLNVNAKW). Catalysis depends on residues Asp-137 and Asp-459. Helical transmembrane passes span 537–557 (VWPVRAPFELCYALLGPYCLL), 570–590 (GFYIALALFIAYNTYMFMEFI), 608–628 (ITSASAWLLAFLTVILKTLGF), 664–684 (VFIPVTALAMLSVIAIAVGAW), 697–717 (GPGISEFISCGWLVLCFMPLL), and 727–747 (GIPWSIKMKACLLVAIFLLFC).

It belongs to the glycosyltransferase 2 family. Plant cellulose synthase-like H subfamily.

The protein resides in the golgi apparatus membrane. Its function is as follows. Thought to be a Golgi-localized beta-glycan synthase that polymerize the backbones of noncellulosic polysaccharides (hemicelluloses) of plant cell wall. The sequence is that of Cellulose synthase-like protein H1 (CSLH1) from Oryza sativa subsp. japonica (Rice).